The chain runs to 78 residues: Large ribosomal subunit protein bL28 (78 aa).

The interval 1–29 (MSAHCQVTGRKPSFGKSVSHSHRRTSRRW) is disordered.

Belongs to the bacterial ribosomal protein bL28 family.

The chain is Large ribosomal subunit protein bL28 from Corynebacterium glutamicum (strain ATCC 13032 / DSM 20300 / JCM 1318 / BCRC 11384 / CCUG 27702 / LMG 3730 / NBRC 12168 / NCIMB 10025 / NRRL B-2784 / 534).